Consider the following 347-residue polypeptide: 4-hydroxy-2-oxovalerate aldolase (347 aa).

The Pyruvate carboxyltransferase domain occupies 2-252 (ILISDATLRD…DTRTTFERVM (251 aa)). 10–11 (RD) serves as a coordination point for substrate. Asp11 is a Mn(2+) binding site. His14 serves as the catalytic Proton acceptor. Positions 164 and 191 each coordinate substrate. Mn(2+)-binding residues include His191 and His193.

It belongs to the 4-hydroxy-2-oxovalerate aldolase family.

The catalysed reaction is (S)-4-hydroxy-2-oxopentanoate = acetaldehyde + pyruvate. The protein is 4-hydroxy-2-oxovalerate aldolase (mhpE) of Burkholderia pseudomallei (strain K96243).